Reading from the N-terminus, the 192-residue chain is Fe/S biogenesis protein NfuA (192 aa).

Positions 150 and 153 each coordinate [4Fe-4S] cluster.

This sequence belongs to the NfuA family. As to quaternary structure, homodimer. Requires [4Fe-4S] cluster as cofactor.

Involved in iron-sulfur cluster biogenesis. Binds a 4Fe-4S cluster, can transfer this cluster to apoproteins, and thereby intervenes in the maturation of Fe/S proteins. Could also act as a scaffold/chaperone for damaged Fe/S proteins. In Vesicomyosocius okutanii subsp. Calyptogena okutanii (strain HA), this protein is Fe/S biogenesis protein NfuA.